The primary structure comprises 321 residues: Cytochrome c biogenesis protein CcsA (321 aa).

Transmembrane regions (helical) follow at residues 17–37 (IISI…IIGL), 41–61 (LEKG…IRWV), 68–88 (LSNL…IHIF), 143–163 (MLLS…LLVI), 227–247 (IINL…VWAN), 260–277 (ETWA…LHTR), and 288–308 (AIVA…VNLL).

This sequence belongs to the CcmF/CycK/Ccl1/NrfE/CcsA family. In terms of assembly, may interact with Ccs1.

The protein localises to the plastid. It is found in the chloroplast thylakoid membrane. Its function is as follows. Required during biogenesis of c-type cytochromes (cytochrome c6 and cytochrome f) at the step of heme attachment. This Piper cenocladum (Ant piper) protein is Cytochrome c biogenesis protein CcsA.